Reading from the N-terminus, the 1083-residue chain is Error-prone DNA polymerase (1083 aa).

It belongs to the DNA polymerase type-C family. DnaE2 subfamily.

It localises to the cytoplasm. It catalyses the reaction DNA(n) + a 2'-deoxyribonucleoside 5'-triphosphate = DNA(n+1) + diphosphate. Its function is as follows. DNA polymerase involved in damage-induced mutagenesis and translesion synthesis (TLS). It is not the major replicative DNA polymerase. This Xanthomonas axonopodis pv. citri (strain 306) protein is Error-prone DNA polymerase.